We begin with the raw amino-acid sequence, 1974 residues long: Protein Ycf2 (1974 aa).

Residues 219–246 (SQLKGSSYQSRDHLDSISNEDSEYHNQR) form a disordered region. 1308–1315 (GSIGTGRS) is a binding site for ATP.

This sequence belongs to the Ycf2 family.

It is found in the plastid. Its subcellular location is the chloroplast stroma. Its function is as follows. Probable ATPase of unknown function. Its presence in a non-photosynthetic plant (Epifagus virginiana) and experiments in tobacco indicate that it has an essential function which is probably not related to photosynthesis. The protein is Protein Ycf2 of Jasminum nudiflorum (Winter jasmine).